The sequence spans 149 residues: Transcription factor MafF (149 aa).

The basic motif stretch occupies residues R51–K76. Positions R51–L114 constitute a bZIP domain. Residues L79–L93 are leucine-zipper.

Belongs to the bZIP family. Maf subfamily. Monomer and homo- or heterodimer. Highly expressed in the ovary, lower expression in the brain, heart and mesenterium.

The protein localises to the nucleus. Since it lacks a putative transactivation domain, it may behave as a transcriptional repressor when it dimerizes among itself. May also serve as a transcriptional activator by dimerizing with other (usually larger) basic-zipper proteins and recruiting them to specific DNA-binding sites. May be involved in the cellular stress response. In Gallus gallus (Chicken), this protein is Transcription factor MafF (MAFF).